Reading from the N-terminus, the 123-residue chain is Defensin beta 118 (123 aa).

An N-terminal signal peptide occupies residues 1–19; it reads MKLLLLALPVLVLLPQVIP. 3 cysteine pairs are disulfide-bonded: Cys27-Cys54, Cys34-Cys48, and Cys38-Cys55. A propeptide spanning residues 65–123 is cleaved from the precursor; the sequence is VPMTSPTPLSDSTPGIIDDILTVRFTTDYFEVSSKKDMVEESEAGRGTETSLPNVHHSS. Residues 100–110 show a composition bias toward basic and acidic residues; that stretch reads KDMVEESEAGR. The interval 100–123 is disordered; that stretch reads KDMVEESEAGRGTETSLPNVHHSS. Residues 112-123 show a composition bias toward polar residues; that stretch reads TETSLPNVHHSS.

The protein belongs to the beta-defensin family. In terms of processing, the three-dimensional structure formed by the three intramolecular disulfide bridges is indispensable for antimicrobial activity.

It is found in the secreted. Functionally, host defense peptide that exhibits antimicrobial activity against both Gram-negative bacteria, such as E.coli and S.typhimurium, and Gram-positive bacteria, such as S.aureus and B.subtilis. Inhibits cell adhesion of E.coli on intestinal epithelial enterocytes. Causes rapid permeabilization of both the outer and inner membrane of E.coli, leading to morphological alterations on the bacterial surface. Binds to bacterial lipopolysaccharides (LPS) with high affinity, and may thereby be involved in immunoregulation through LPS neutralization. May contribute to epididymal innate immunity and protect the sperm against attack by microorganisms. The polypeptide is Defensin beta 118 (DEFB118) (Pan troglodytes (Chimpanzee)).